The sequence spans 422 residues: Monoacylglycerol lipase ABHD2 (422 aa).

At 1 to 15 (MSAQLEADVRTMSPE) the chain is on the cytoplasmic side. The helical; Signal-anchor for type II membrane protein transmembrane segment at 16 to 36 (MPAMFDGMKLAAVAAVLYVIV) threads the bilayer. Residues 37 to 422 (RSLNLKCPTA…HKPQCHQQKE (386 aa)) are Extracellular-facing. One can recognise an AB hydrolase-1 domain in the interval 134-385 (MVICPGIGNH…HGGHLGFFEG (252 aa)). N-linked (GlcNAc...) asparagine glycosylation occurs at N142. S213 functions as the Nucleophile in the catalytic mechanism. N-linked (GlcNAc...) asparagine glycosylation is found at N285, N335, and N344. Residues D348 and H379 each act as charge relay system in the active site.

This sequence belongs to the AB hydrolase superfamily. AB hydrolase 4 family.

It is found in the cell membrane. The catalysed reaction is Hydrolyzes glycerol monoesters of long-chain fatty acids.. The enzyme catalyses an acetyl ester + H2O = an aliphatic alcohol + acetate + H(+). It catalyses the reaction a triacylglycerol + H2O = a diacylglycerol + a fatty acid + H(+). It carries out the reaction 2-(5Z,8Z,11Z,14Z-eicosatetraenoyl)-glycerol + H2O = glycerol + (5Z,8Z,11Z,14Z)-eicosatetraenoate + H(+). The catalysed reaction is a butanoate ester + H2O = an aliphatic alcohol + butanoate + H(+). The enzyme catalyses hexadecanoate ester + H2O = an aliphatic alcohol + hexadecanoate + H(+). Acylglycerol lipase activity is activated upon binding to progesterone. Progesterone-dependent acylglycerol lipase that catalyzes hydrolysis of endocannabinoid arachidonoylglycerol (AG) from cell membrane. Acts as a progesterone receptor: progesterone-binding activates the acylglycerol lipase activity, mediating degradation of 1-arachidonoylglycerol (1AG) and 2-arachidonoylglycerol (2AG) to glycerol and arachidonic acid (AA). Also displays an ester hydrolase activity against acetyl ester, butanoate ester and hexadecanoate ester. Plays a key role in sperm capacitation in response to progesterone by mediating degradation of 2AG, an inhibitor of the sperm calcium channel CatSper, leading to calcium influx via CatSper and sperm activation. May also play a role in smooth muscle cells migration. The protein is Monoacylglycerol lipase ABHD2 (abhd2b) of Danio rerio (Zebrafish).